The following is a 756-amino-acid chain: Photosystem I P700 chlorophyll a apoprotein A1 (756 aa).

The next 8 membrane-spanning stretches (helical) occupy residues 73–96, 159–182, 198–222, 298–316, 353–376, 392–418, 440–462, and 537–555; these read IFSA…FHGA, LYVT…FHYH, MNHH…HVSL, TAHH…GHMY, WHAQ…HHMY, LSLF…IYMV, AIIS…LYIH, and FLVH…LILL. The [4Fe-4S] cluster site is built by Cys579 and Cys588. Helical transmembrane passes span 595 to 616 and 670 to 692; these read HVFL…HFSW and LSAY…MFLF. A chlorophyll a'-binding site is contributed by His681. Chlorophyll a-binding residues include Met689 and Tyr697. Position 698 (Trp698) interacts with phylloquinone. Residues 730–750 traverse the membrane as a helical segment; sequence AVGVAHYLLGGIATTWAFFLA.

Belongs to the PsaA/PsaB family. As to quaternary structure, the PsaA/B heterodimer binds the P700 chlorophyll special pair and subsequent electron acceptors. PSI consists of a core antenna complex that captures photons, and an electron transfer chain that converts photonic excitation into a charge separation. The cyanobacterial PSI reaction center is composed of one copy each of PsaA,B,C,D,E,F,I,J,K,L,M and X, and forms trimeric complexes. The cofactor is PSI electron transfer chain: 5 chlorophyll a, 1 chlorophyll a', 2 phylloquinones and 3 4Fe-4S clusters. PSI core antenna: 90 chlorophyll a, 22 carotenoids, 3 phospholipids and 1 galactolipid. P700 is a chlorophyll a/chlorophyll a' dimer, A0 is one or more chlorophyll a, A1 is one or both phylloquinones and FX is a shared 4Fe-4S iron-sulfur center..

It localises to the cellular thylakoid membrane. The catalysed reaction is reduced [plastocyanin] + hnu + oxidized [2Fe-2S]-[ferredoxin] = oxidized [plastocyanin] + reduced [2Fe-2S]-[ferredoxin]. PsaA and PsaB bind P700, the primary electron donor of photosystem I (PSI), as well as the electron acceptors A0, A1 and FX. PSI is a plastocyanin/cytochrome c6-ferredoxin oxidoreductase, converting photonic excitation into a charge separation, which transfers an electron from the donor P700 chlorophyll pair to the spectroscopically characterized acceptors A0, A1, FX, FA and FB in turn. Oxidized P700 is reduced on the lumenal side of the thylakoid membrane by plastocyanin or cytochrome c6. The chain is Photosystem I P700 chlorophyll a apoprotein A1 from Cyanothece sp. (strain PCC 7425 / ATCC 29141).